Here is a 211-residue protein sequence, read N- to C-terminus: Probable nicotinate-nucleotide adenylyltransferase (211 aa).

The protein belongs to the NadD family.

It carries out the reaction nicotinate beta-D-ribonucleotide + ATP + H(+) = deamido-NAD(+) + diphosphate. Its pathway is cofactor biosynthesis; NAD(+) biosynthesis; deamido-NAD(+) from nicotinate D-ribonucleotide: step 1/1. In terms of biological role, catalyzes the reversible adenylation of nicotinate mononucleotide (NaMN) to nicotinic acid adenine dinucleotide (NaAD). This chain is Probable nicotinate-nucleotide adenylyltransferase, found in Legionella pneumophila (strain Paris).